A 258-amino-acid polypeptide reads, in one-letter code: Glutamate racemase (258 aa).

Residues 11 to 12 and 43 to 44 contribute to the substrate site; these read DS and YG. Cys74 functions as the Proton donor/acceptor in the catalytic mechanism. Position 75 to 76 (75 to 76) interacts with substrate; that stretch reads NT. Cys182 serves as the catalytic Proton donor/acceptor. 183 to 184 serves as a coordination point for substrate; that stretch reads TH.

Belongs to the aspartate/glutamate racemases family.

It carries out the reaction L-glutamate = D-glutamate. It participates in cell wall biogenesis; peptidoglycan biosynthesis. In terms of biological role, provides the (R)-glutamate required for cell wall biosynthesis. In Leptospira borgpetersenii serovar Hardjo-bovis (strain JB197), this protein is Glutamate racemase.